The following is a 246-amino-acid chain: Pyridoxine 5'-phosphate synthase (246 aa).

Asn12 is a 3-amino-2-oxopropyl phosphate binding site. Asp14–His15 contacts 1-deoxy-D-xylulose 5-phosphate. Position 23 (Arg23) interacts with 3-amino-2-oxopropyl phosphate. His48 acts as the Proton acceptor in catalysis. Arg50 and His55 together coordinate 1-deoxy-D-xylulose 5-phosphate. Glu75 serves as the catalytic Proton acceptor. Thr105 is a 1-deoxy-D-xylulose 5-phosphate binding site. His196 serves as the catalytic Proton donor. Residues Gly197 and Gly218–His219 each bind 3-amino-2-oxopropyl phosphate.

It belongs to the PNP synthase family. As to quaternary structure, homooctamer; tetramer of dimers.

It localises to the cytoplasm. It carries out the reaction 3-amino-2-oxopropyl phosphate + 1-deoxy-D-xylulose 5-phosphate = pyridoxine 5'-phosphate + phosphate + 2 H2O + H(+). It participates in cofactor biosynthesis; pyridoxine 5'-phosphate biosynthesis; pyridoxine 5'-phosphate from D-erythrose 4-phosphate: step 5/5. In terms of biological role, catalyzes the complicated ring closure reaction between the two acyclic compounds 1-deoxy-D-xylulose-5-phosphate (DXP) and 3-amino-2-oxopropyl phosphate (1-amino-acetone-3-phosphate or AAP) to form pyridoxine 5'-phosphate (PNP) and inorganic phosphate. This chain is Pyridoxine 5'-phosphate synthase, found in Pseudomonas putida (strain GB-1).